A 211-amino-acid chain; its full sequence is Pyrrolidone-carboxylate peptidase 1 (211 aa).

Residues Glu-79, Cys-142, and His-164 contribute to the active site.

It belongs to the peptidase C15 family. As to quaternary structure, homotetramer.

It is found in the cytoplasm. The catalysed reaction is Release of an N-terminal pyroglutamyl group from a polypeptide, the second amino acid generally not being Pro.. Removes 5-oxoproline from various penultimate amino acid residues except L-proline. The sequence is that of Pyrrolidone-carboxylate peptidase 1 (pcp1) from Saccharolobus solfataricus (strain ATCC 35092 / DSM 1617 / JCM 11322 / P2) (Sulfolobus solfataricus).